An 807-amino-acid chain; its full sequence is DNA gyrase subunit B (807 aa).

The region spanning 429 to 543 (SELFIVEGDS…KGYLYIAQPP (115 aa)) is the Toprim domain. Residues E435, D508, and D510 each contribute to the Mg(2+) site.

The protein belongs to the type II topoisomerase GyrB family. Heterotetramer, composed of two GyrA and two GyrB chains. In the heterotetramer, GyrA contains the active site tyrosine that forms a transient covalent intermediate with DNA, while GyrB binds cofactors and catalyzes ATP hydrolysis. Mg(2+) is required as a cofactor. Mn(2+) serves as cofactor. Requires Ca(2+) as cofactor.

Its subcellular location is the cytoplasm. The catalysed reaction is ATP-dependent breakage, passage and rejoining of double-stranded DNA.. A type II topoisomerase that negatively supercoils closed circular double-stranded (ds) DNA in an ATP-dependent manner to modulate DNA topology and maintain chromosomes in an underwound state. Negative supercoiling favors strand separation, and DNA replication, transcription, recombination and repair, all of which involve strand separation. Also able to catalyze the interconversion of other topological isomers of dsDNA rings, including catenanes and knotted rings. Type II topoisomerases break and join 2 DNA strands simultaneously in an ATP-dependent manner. The polypeptide is DNA gyrase subunit B (Rickettsia typhi (strain ATCC VR-144 / Wilmington)).